Consider the following 333-residue polypeptide: PDZ domain-containing protein GIPC1 (333 aa).

Over residues 1–11 (MPLGLGRRKKA) the composition is skewed to basic residues. Residues 1–55 (MPLGLGRRKKAPPLVENEEAEPSRSGLGVGEPGPLGGSGAGESQMGLPPPPASLR) form a disordered region. Residues 27–40 (LGVGEPGPLGGSGA) show a composition bias toward gly residues. The residue at position 68 (Ser68) is a Phosphoserine. The region spanning 133 to 213 (EVEVFKSEDA…GRTFTLKLTE (81 aa)) is the PDZ domain. A disordered region spans residues 221 to 244 (ISQRSSGGHPGSGPQLGTGRGTLR). 3 positions are modified to phosphoserine: Ser222, Ser225, and Ser232. Positions 228–240 (GHPGSGPQLGTGR) are enriched in gly residues. Thr242 carries the phosphothreonine modification. Position 247 is a phosphoserine (Ser247).

The protein belongs to the GIPC family. In terms of assembly, interacts with SDC4/syndecan-4 and SEMA4C/semaphorin-4C. Interacts with RGS19 (C-terminus), GLUT1 (C-terminus), ACTN1, KIF1B, MYO6 and PLEKHG5. In terms of tissue distribution, widely expressed.

The protein localises to the cytoplasm. It is found in the membrane. Functionally, may be involved in G protein-linked signaling. The polypeptide is PDZ domain-containing protein GIPC1 (Gipc1) (Rattus norvegicus (Rat)).